Here is a 559-residue protein sequence, read N- to C-terminus: DNA ligase (559 aa).

Glu247 contacts ATP. Catalysis depends on Lys249, which acts as the N6-AMP-lysine intermediate. 6 residues coordinate ATP: Arg254, Arg269, Glu299, Phe339, Arg414, and Lys420.

This sequence belongs to the ATP-dependent DNA ligase family. Mg(2+) is required as a cofactor.

The catalysed reaction is ATP + (deoxyribonucleotide)n-3'-hydroxyl + 5'-phospho-(deoxyribonucleotide)m = (deoxyribonucleotide)n+m + AMP + diphosphate.. In terms of biological role, DNA ligase that seals nicks in double-stranded DNA during DNA replication, DNA recombination and DNA repair. The chain is DNA ligase from Pyrococcus abyssi (strain GE5 / Orsay).